The sequence spans 436 residues: UPF0597 protein YhaM (436 aa).

It belongs to the UPF0597 family.

Functionally, thought to be a D-serine dehydratase, however it does not complement a dsdA (D-serine dehydratase) mutant in strain CFT073, suggesting it may not have that function. The sequence is that of UPF0597 protein YhaM from Escherichia coli O157:H7.